Here is a 261-residue protein sequence, read N- to C-terminus: Putative outer membrane protein CT_371 (261 aa).

The first 18 residues, 1–18 (MRLCFILFLLLSPLISEA), serve as a signal peptide directing secretion.

The protein resides in the cell outer membrane. The protein is Putative outer membrane protein CT_371 of Chlamydia trachomatis serovar D (strain ATCC VR-885 / DSM 19411 / UW-3/Cx).